A 486-amino-acid polypeptide reads, in one-letter code: F420-non-reducing hydrogenase iron-sulfur subunit A (486 aa).

Residues cysteine 61 and cysteine 64 each coordinate Ni(2+).

The protein belongs to the [NiFe]/[NiFeSe] hydrogenase large subunit family. The F420-non-reducing hydrogenase is composed of three subunits; MvhA, MvhD and MvhG. It forms a complex with the heterodisulfide reductase (Hdr). The cofactor is Ni(2+).

It localises to the cytoplasm. In terms of biological role, part of a complex that provides reducing equivalents for heterodisulfide reductase. This chain is F420-non-reducing hydrogenase iron-sulfur subunit A (mvhA), found in Archaeoglobus profundus (strain DSM 5631 / JCM 9629 / NBRC 100127 / Av18).